The chain runs to 436 residues: UDP-N-acetylmuramate--L-alanine ligase (436 aa).

111–117 (GTHGKTS) contacts ATP.

This sequence belongs to the MurCDEF family.

Its subcellular location is the cytoplasm. It carries out the reaction UDP-N-acetyl-alpha-D-muramate + L-alanine + ATP = UDP-N-acetyl-alpha-D-muramoyl-L-alanine + ADP + phosphate + H(+). It participates in cell wall biogenesis; peptidoglycan biosynthesis. Cell wall formation. The protein is UDP-N-acetylmuramate--L-alanine ligase of Pediococcus pentosaceus (strain ATCC 25745 / CCUG 21536 / LMG 10740 / 183-1w).